Reading from the N-terminus, the 926-residue chain is OTU domain-containing protein 7A (926 aa).

The residue at position 121 (serine 121) is a Phosphoserine. Positions 170-413 (ERDLIEQATM…AVDPGKDWEW (244 aa)) are TRAF-binding. Positions 185-452 (AGRLNWWSTV…VTWIRIPSET (268 aa)) are catalytic. Residues 201–377 (LLPLATTGDG…QAHFSALVSM (177 aa)) enclose the OTU domain. Residue aspartate 209 is part of the active site. Cysteine 212 acts as the Nucleophile in catalysis. Catalysis depends on histidine 370, which acts as the Proton acceptor. 3 disordered regions span residues 455-517 (PLAQ…DSVA), 540-615 (GLVH…GDAW), and 671-779 (EQEQ…ARQS). Positions 484-494 (VCSNSNSNNGK) are enriched in low complexity. Over residues 495–513 (NGKDKEKEKQRKDKDKTRA) the composition is skewed to basic and acidic residues. The Nuclear localization signal signature appears at 497–512 (KDKEKEKQRKDKDKTR). 3 stretches are compositionally biased toward low complexity: residues 579–595 (GASA…PSPT), 680–691 (AAAAAAATATAT), and 731–750 (SPGT…AASP). A compositionally biased stretch (gly residues) spans 751–767 (GPGGGARRAAPGTGGPT). Position 880 is an omega-N-methylarginine (arginine 880). The A20-type zinc finger occupies 884-919 (GPAQRRCQRENCAFYGRAETEHFCSYCYREELRRRR). Zn(2+) is bound by residues cysteine 890, cysteine 895, cysteine 907, and cysteine 910.

It belongs to the peptidase C64 family.

The protein localises to the cytoplasm. The protein resides in the nucleus. The enzyme catalyses Thiol-dependent hydrolysis of ester, thioester, amide, peptide and isopeptide bonds formed by the C-terminal Gly of ubiquitin (a 76-residue protein attached to proteins as an intracellular targeting signal).. Its function is as follows. Deubiquitinase, which cleaves 'Lys-11'-linked polyubiquitin chains. In Mus musculus (Mouse), this protein is OTU domain-containing protein 7A (Otud7a).